Reading from the N-terminus, the 300-residue chain is Bifunctional protein FolD (300 aa).

Residues Gly-168–Ser-170, Ser-193, and Ile-234 contribute to the NADP(+) site.

The protein belongs to the tetrahydrofolate dehydrogenase/cyclohydrolase family. As to quaternary structure, homodimer.

The catalysed reaction is (6R)-5,10-methylene-5,6,7,8-tetrahydrofolate + NADP(+) = (6R)-5,10-methenyltetrahydrofolate + NADPH. It catalyses the reaction (6R)-5,10-methenyltetrahydrofolate + H2O = (6R)-10-formyltetrahydrofolate + H(+). The protein operates within one-carbon metabolism; tetrahydrofolate interconversion. Catalyzes the oxidation of 5,10-methylenetetrahydrofolate to 5,10-methenyltetrahydrofolate and then the hydrolysis of 5,10-methenyltetrahydrofolate to 10-formyltetrahydrofolate. The polypeptide is Bifunctional protein FolD (Ehrlichia ruminantium (strain Gardel)).